A 336-amino-acid chain; its full sequence is MGGTKLTHVTTTNPNNSNIHGPVVDEVEGLIKVYKDGHVERSQLLPCVDPSLPLELGVTCSDVVIDKLTNVWARLYVPMTTTKSSVSKLPLIVYFHGGGFCVGSASWLCYHEFLARLSARSRCLVMSVNYRLAPENPLPAAYEDGVNAILWLNKARNDNLWAKQCDFGRIFLAGDSAGGNIAQQVAARLASPEDLALKIEGTILIQPFYSGEERTESERRVGNDKTAVLTLASSDAWWRMSLPRGANREHPYCKPVKMIIKSSTVTRTLVCVAEMDLLMDSNMEMCDGNEDVIKRVLHKGVGHAFHILGKSQLAHTTTLEMLCQIDAFIHHYDPLN.

Residues Met1–His20 form a disordered region. A compositionally biased stretch (polar residues) spans Thr7 to Ile19. An Involved in the stabilization of the negatively charged intermediate by the formation of the oxyanion hole motif is present at residues His96–Gly98. Active-site residues include Ser176, Asp276, and His303.

The protein belongs to the 'GDXG' lipolytic enzyme family. In terms of tissue distribution, expressed in roots, leaves, flowers and siliques.

The catalysed reaction is a carboxylic ester + H2O = an alcohol + a carboxylate + H(+). In terms of biological role, carboxylesterase acting on esters with varying acyl chain length. The chain is Probable carboxylesterase 6 (CXE6) from Arabidopsis thaliana (Mouse-ear cress).